The sequence spans 415 residues: Packaging protein 3 (415 aa).

2 disordered regions span residues methionine 1–alanine 56 and glutamate 66–lysine 85. The interaction with packaging protein 1 stretch occupies residues methionine 1–serine 173. Over residues proline 31–aspartate 46 the composition is skewed to low complexity. Serine 75 carries the post-translational modification Phosphoserine; by host. The span at proline 76 to lysine 85 shows a compositional bias: basic and acidic residues. Residue serine 360 is modified to Phosphoserine; by host. Residues glycine 381–glycine 394 show a composition bias toward low complexity. The tract at residues glycine 381–tyrosine 415 is disordered. The segment covering glutamate 400 to tyrosine 415 has biased composition (acidic residues).

This sequence belongs to the adenoviridae packaging protein 3 family. In terms of assembly, part of the genome packaging complex composed of packaging proteins 1, 2 and 3; this complex specifically binds to the packaging sequence on the left end of viral genomic DNA and performs packaging of the viral genome. Interacts with hexon-linking protein IIIa; this interaction is required to promote correct genome packaging. Post-translationally, cleaved at different sites by the viral protease during virion maturation.

The protein localises to the host nucleus. In terms of biological role, involved in viral genome packaging through its interaction with packaging proteins 1 and 2. After proteolytic cleavage by adenovirus protease, L1 52/55k protein is removed from the capsid during viral maturation. In Human adenovirus C serotype 2 (HAdV-2), this protein is Packaging protein 3.